The sequence spans 331 residues: Olfactory receptor 7E178 (331 aa).

Topologically, residues 1–47 are extracellular; it reads MMDRYSFIMHQHRDDTVWCPSKIEEQNITRISEFHLMGLSDDLQLQP. N-linked (GlcNAc...) asparagine glycosylation is present at Asn27. A helical membrane pass occupies residues 48–68; that stretch reads ILFGLFLSMYLVTLLGNLLII. The Cytoplasmic segment spans residues 69 to 80; it reads LTVSSDSHLHSP. Residues 81–100 form a helical membrane-spanning segment; that stretch reads MYFFLSNLSLADVSFTSTTL. Over 101–119 the chain is Extracellular; the sequence is PKMIVDIQTHNRAISYSGC. A disulfide bond links Cys119 and Cys201. A helical membrane pass occupies residues 120–140; it reads LTQMSFFMLFGCLDSLLLTAM. Residues 141–164 are Cytoplasmic-facing; sequence AYDRFVAICHPLHYQFIMNPRLCG. Residues 165-185 form a helical membrane-spanning segment; it reads LLVFLSVLISLFVSQLHNSVV. Over 186-218 the chain is Extracellular; it reads LQLTYFKSVDISHFFCDPSQLLNLACSDTFTNN. A helical transmembrane segment spans residues 219–239; the sequence is IVMYFVGAISGFLPISGIFFS. Residues 240-266 are Cytoplasmic-facing; it reads YYKIVSSILRMPSPGGKYKAFSTCGSH. The chain crosses the membrane as a helical span at residues 267–287; that stretch reads LSVVCLFYGTGLGVYLSSAVS. Topologically, residues 288-293 are extracellular; it reads LSPRKG. Residues 294-314 traverse the membrane as a helical segment; sequence AVASIVYTVVTPMLNPFIYSL. Over 315 to 331 the chain is Cytoplasmic; sequence RNQDIKRAMWRLLRKTV.

It belongs to the G-protein coupled receptor 1 family.

Its subcellular location is the cell membrane. Its function is as follows. Odorant receptor. The chain is Olfactory receptor 7E178 from Mus musculus (Mouse).